The sequence spans 810 residues: F-BAR domain only protein 2 (810 aa).

One can recognise an F-BAR domain in the interval 3 to 250 (MAYFVENFWG…NMANTTVESL (248 aa)). The interval 3–274 (MAYFVENFWG…PGLIEFEECD (272 aa)) is mediates dimerization and binding to membranes enriched in Pi(4,5)-P2 and induces their tubulation. Positions 87-156 (HLDLVRKLQE…CVEQERLKKE (70 aa)) form a coiled coil. Residue Lys297 forms a Glycyl lysine isopeptide (Lys-Gly) (interchain with G-Cter in SUMO2) linkage. The segment at 301–352 (DAESVECPDADSLNIPDVDEEGYSIKPETNQNDTKENHFYSSSDSDSEDEEP) is disordered. Ser312 is modified (phosphoserine). Thr385 bears the Phosphothreonine mark. A phosphoserine mark is found at Ser387, Ser394, and Ser403. The tract at residues 404–537 (NEELTKSKPS…VSRGPSPVSL (134 aa)) is disordered. Positions 433–456 (PSLDSSSSSSLTSSSSARPTTPLS) are enriched in low complexity. A phosphoserine mark is found at Ser488, Ser493, Ser496, Ser508, Ser510, Ser511, and Ser533. The segment covering 502 to 521 (PLARAESSSSISSSASLSAA) has biased composition (low complexity). Residues 521–810 (ANTPTVGVSR…FATGRYLADC (290 aa)) form a mediates interaction with DAB2, EPS15, EPS15R and ITSN1 region. The 268-residue stretch at 542-809 (TLPVAVALTE…RFATGRYLAD (268 aa)) folds into the MHD domain.

The protein belongs to the FCHO family. Homodimer; disulfide-linked. May form homotetramer. Interacts with AP2A1. Interacts with EPS15, EPS15R, ITSN1 and ITSN2; recruit those scaffolding proteins which in turn may interact with the adaptor protein complex AP-2 at the plasma membrane. Interacts with DAB2 (via DPF motifs); mediates LDL receptor/LDLR endocytosis. Post-translationally, ubiquitinated. Mainly undergoes monoubiquitination but also polyubiquitination.

The protein localises to the membrane. Its subcellular location is the clathrin-coated pit. In terms of biological role, functions in an early step of clathrin-mediated endocytosis. Has both a membrane binding/bending activity and the ability to recruit proteins essential to the formation of functional clathrin-coated pits. Has a lipid-binding activity with a preference for membranes enriched in phosphatidylserine and phosphoinositides (Pi(4,5) biphosphate) like the plasma membrane. Its membrane-bending activity might be important for the subsequent action of clathrin and adaptors in the formation of clathrin-coated vesicles. Involved in adaptor protein complex AP-2-dependent endocytosis of the transferrin receptor, it also functions in the AP-2-independent endocytosis of the LDL receptor. This chain is F-BAR domain only protein 2 (FCHO2), found in Homo sapiens (Human).